The primary structure comprises 352 residues: Photosystem II D2 protein (352 aa).

Residues 40 to 60 (CAFLSIGGWLTGTTFVTSWYT) form a helical membrane-spanning segment. Residue H117 participates in chlorophyll a binding. The chain crosses the membrane as a helical span at residues 124 to 140 (GFCLRQIEIARLVGIRP). 2 residues coordinate pheophytin a: Q129 and N142. A helical transmembrane segment spans residues 152 to 165 (VFVSVFLMYPLGQS). A chlorophyll a-binding site is contributed by H197. A helical transmembrane segment spans residues 207–227 (GALLCAIHGATVENTLFQDGE). A plastoquinone is bound by residues H214 and F261. H214 provides a ligand contact to Fe cation. Position 268 (H268) interacts with Fe cation. Residues 278-294 (GLWMSSIGIVGLAFNLR) traverse the membrane as a helical segment.

This sequence belongs to the reaction center PufL/M/PsbA/D family. As to quaternary structure, PSII is composed of 1 copy each of membrane proteins PsbA, PsbB, PsbC, PsbD, PsbE, PsbF, PsbH, PsbI, PsbJ, PsbK, PsbL, PsbM, PsbT, PsbX, PsbY, PsbZ, Psb30/Ycf12, peripheral proteins PsbO, CyanoQ (PsbQ), PsbU, PsbV and a large number of cofactors. It forms dimeric complexes. The D1/D2 heterodimer binds P680, chlorophylls that are the primary electron donor of PSII, and subsequent electron acceptors. It shares a non-heme iron and each subunit binds pheophytin, quinone, additional chlorophylls, carotenoids and lipids. There is also a Cl(-1) ion associated with D1 and D2, which is required for oxygen evolution. The PSII complex binds additional chlorophylls, carotenoids and specific lipids. is required as a cofactor.

It localises to the cellular thylakoid membrane. The catalysed reaction is 2 a plastoquinone + 4 hnu + 2 H2O = 2 a plastoquinol + O2. Photosystem II (PSII) is a light-driven water:plastoquinone oxidoreductase that uses light energy to abstract electrons from H(2)O, generating O(2) and a proton gradient subsequently used for ATP formation. It consists of a core antenna complex that captures photons, and an electron transfer chain that converts photonic excitation into a charge separation. The D1/D2 (PsbA/PsbD) reaction center heterodimer binds P680, the primary electron donor of PSII as well as several subsequent electron acceptors. D2 is needed for assembly of a stable PSII complex. This chain is Photosystem II D2 protein, found in Trichodesmium erythraeum (strain IMS101).